The chain runs to 639 residues: Methyl-accepting chemotaxis protein McpS (639 aa).

Over 1–13 (MNSWFANISVNLK) the chain is Cytoplasmic. The chain crosses the membrane as a helical span at residues 14–34 (LGLGFGLVLVLTGLLALTGWT). Over 35–288 (SLGSLIDRSN…RDIESTQARS (254 aa)) the chain is Periplasmic. The HBM domain maps to 41–283 (DRSNWMGDIG…IQLERRDIES (243 aa)). 60 to 65 (RIARLQ) serves as a coordination point for (S)-malate. Residue 60-65 (RIARLQ) coordinates succinate. Asp-138, Arg-183, Arg-187, and Tyr-236 together coordinate acetate. Positions 191–245 (AENSSANEQAALRQLDAALADTDNLKRQLPSEDARLQQFENAVLAYRDAVRQFRD) form a coiled coil. Residues Arg-254 and Thr-258 each coordinate (S)-malate. Arg-254 lines the succinate pocket. Residues 289–309 (LQAIATLLALLVGVLAAVLIT) traverse the membrane as a helical segment. Residues 310–362 (RQITRPLQDTLVAVEKIASGDLTQHMRVTRRDELGVLQQGIARMGTTLRELIS) enclose the HAMP domain. Residues 310–639 (RQITRPLQDT…LQTLVSQFRV (330 aa)) lie on the Cytoplasmic side of the membrane. The 237-residue stretch at 367-603 (GVTQIASAAE…EISRSILNVR (237 aa)) folds into the Methyl-accepting transducer domain.

Belongs to the methyl-accepting chemotaxis (MCP) protein family. As to quaternary structure, homodimer. Exists as a mixture of monomers and dimers in solution. Ligand binding stabilizes the dimeric form. Post-translationally, methylated by CheR2.

The protein localises to the cell membrane. With respect to regulation, binding of citrate to the ligand-binding domain reduces the chemotaxis towards the strong attractants such as malate and succinate. However, in physiologically relevant niches, citrate is mostly complexed with magnesium or calcium ions, and does not bind McpS. In terms of biological role, chemotactic-signal transducers respond to changes in the concentration of attractants and repellents in the environment, transduce a signal from the outside to the inside of the cell, and facilitate sensory adaptation through the variation of the level of methylation. McpS is a specific chemoreceptor for 6 tricarboxylic acid (TCA) cycle intermediates (succinate, fumarate, malate, oxaloacetate, citrate and isocitrate), butyrate and acetate. Malate, succinate, fumarate and oxaloacetate cause the strongest chemotactic response. The protein is Methyl-accepting chemotaxis protein McpS (mcpS) of Pseudomonas putida (strain ATCC 47054 / DSM 6125 / CFBP 8728 / NCIMB 11950 / KT2440).